A 208-amino-acid chain; its full sequence is Protein-L-isoaspartate O-methyltransferase (208 aa).

The active site involves S59.

Belongs to the methyltransferase superfamily. L-isoaspartyl/D-aspartyl protein methyltransferase family.

The protein localises to the cytoplasm. It carries out the reaction [protein]-L-isoaspartate + S-adenosyl-L-methionine = [protein]-L-isoaspartate alpha-methyl ester + S-adenosyl-L-homocysteine. Catalyzes the methyl esterification of L-isoaspartyl residues in peptides and proteins that result from spontaneous decomposition of normal L-aspartyl and L-asparaginyl residues. It plays a role in the repair and/or degradation of damaged proteins. This is Protein-L-isoaspartate O-methyltransferase from Pectobacterium carotovorum subsp. carotovorum (strain PC1).